Consider the following 1426-residue polypeptide: Ferlin 2 (1426 aa).

5 C2 domains span residues 1-111, 161-279, 512-638, 1031-1154, and 1189-1318; these read MGKT…QIRK, RKAV…PRWF, EKSK…ESPT, SEDR…QKSM, and KAGE…TLNS. Positions 1357-1377 are disordered; it reads SKPVGLGREPPNRDPRLTTPQ. The segment covering 1366–1377 has biased composition (basic and acidic residues); that stretch reads PPNRDPRLTTPQ. A helical membrane pass occupies residues 1404 to 1424; it reads VAAVVFLSIWIFVVAFLYPSL.

Belongs to the ferlin family.

It localises to the membrane. The protein localises to the inner membrane complex. The protein resides in the cytoplasmic vesicle. It is found in the secretory vesicle. Its subcellular location is the rhoptry. Its function is as follows. Regulates rhoptry secretion. Required for completing the lytic cycle. Required for host cell invasion. Not required for microneme secretion and conoid extrusion. The protein is Ferlin 2 of Toxoplasma gondii.